Reading from the N-terminus, the 141-residue chain is 15 kDa lipoprotein (141 aa).

The N-terminal stretch at 1-17 (MVKRGRFALCLAVLLGA) is a signal peptide. The N-palmitoyl cysteine moiety is linked to residue C18. C18 carries the S-diacylglycerol cysteine lipid modification.

Its subcellular location is the cell membrane. The polypeptide is 15 kDa lipoprotein (tpp15) (Treponema pallidum (strain Nichols)).